Consider the following 259-residue polypeptide: 14-3-3-like protein (259 aa).

Positions 237 to 259 (DTTDDAEDEIREGSKQESGDGQQ) are disordered. Residues 247 to 259 (REGSKQESGDGQQ) show a composition bias toward basic and acidic residues.

This sequence belongs to the 14-3-3 family. In terms of tissue distribution, leaves specific.

The sequence is that of 14-3-3-like protein from Solanum tuberosum (Potato).